The chain runs to 704 residues: Ion-translocating oxidoreductase complex subunit C (704 aa).

4Fe-4S ferredoxin-type domains follow at residues 368–397 (MGAP…QQLY) and 407–436 (KATA…VQYF). Residues C377, C380, C383, C387, C416, C419, C422, and C426 each coordinate [4Fe-4S] cluster. A disordered region spans residues 536–685 (RAKQAAHPMA…ADPRKAAVAA (150 aa)). Residues 556-565 (KAAVEAAIAR) show a composition bias toward low complexity.

It belongs to the 4Fe4S bacterial-type ferredoxin family. RnfC subfamily. In terms of assembly, the complex is composed of six subunits: RsxA, RsxB, RsxC, RsxD, RsxE and RsxG. [4Fe-4S] cluster serves as cofactor.

Its subcellular location is the cell inner membrane. In terms of biological role, part of a membrane-bound complex that couples electron transfer with translocation of ions across the membrane. Required to maintain the reduced state of SoxR. The sequence is that of Ion-translocating oxidoreductase complex subunit C from Salmonella dublin (strain CT_02021853).